The sequence spans 300 residues: Urease accessory protein UreD (300 aa).

The protein belongs to the UreD family. In terms of assembly, ureD, UreF and UreG form a complex that acts as a GTP-hydrolysis-dependent molecular chaperone, activating the urease apoprotein by helping to assemble the nickel containing metallocenter of UreC. The UreE protein probably delivers the nickel.

It is found in the cytoplasm. Its function is as follows. Required for maturation of urease via the functional incorporation of the urease nickel metallocenter. The protein is Urease accessory protein UreD of Prochlorococcus marinus (strain AS9601).